The sequence spans 890 residues: Possible lysine-specific histone demethylase 1 (890 aa).

A compositionally biased stretch (polar residues) spans M1–M13. The interval M1–V164 is disordered. S24 and S27 each carry phosphoserine. Positions N84–Q109 are enriched in polar residues. Residues A110–E122 are compositionally biased toward basic and acidic residues. Over residues A123–S138 the composition is skewed to low complexity. Residues Q160 to I259 form the SWIRM domain. Position 267 to 295 (V267 to A295) interacts with FAD. Positions D860 to Q890 are disordered. The segment covering L861–N882 has biased composition (low complexity). S866 bears the Phosphoserine mark.

Belongs to the flavin monoamine oxidase family. As to quaternary structure, component of a complex that contains at least HDAC1/Rpd3, CoRest and Su(var)3-3/Hdm. FAD serves as cofactor.

Its subcellular location is the nucleus. It is found in the chromosome. Its function is as follows. Probable histone demethylase that specifically demethylates 'Lys-4' of histone H3, a specific tag for epigenetic transcriptional activation, thereby acting as a corepressor. Required for heterochromatic gene silencing. Acts by oxidizing the substrate by FAD to generate the corresponding imine that is subsequently hydrolyzed. Demethylates both mono- and tri-methylated 'Lys-4' of histone H3. May also demethylate 'Lys-9' of histone H3, Plays a role in the repression of neuronal genes. The protein is Possible lysine-specific histone demethylase 1 (Su(var)3-3) of Drosophila melanogaster (Fruit fly).